Reading from the N-terminus, the 368-residue chain is DNA replication and repair protein RecF (368 aa).

Residue 30–37 coordinates ATP; that stretch reads GRNGSGKT.

The protein belongs to the RecF family.

Its subcellular location is the cytoplasm. Functionally, the RecF protein is involved in DNA metabolism; it is required for DNA replication and normal SOS inducibility. RecF binds preferentially to single-stranded, linear DNA. It also seems to bind ATP. In Chlorobaculum tepidum (strain ATCC 49652 / DSM 12025 / NBRC 103806 / TLS) (Chlorobium tepidum), this protein is DNA replication and repair protein RecF.